Consider the following 318-residue polypeptide: MNQGVGPWQHTTVLLHEAVDALVHSPDGYYVDGTYGRGGHSRLILSKLSAAGRLLAIDRDPDAVAHATSGAARVTDPRFHIEHAPYSELPALLAARGVSRIDGLLLDIGVSSPQIDNPERGFSFRASGPLDMRMDPTRGESAADYLARADEREIAAVIRDYGEERFATAIARALVARRLAGRPVRTTEELAELVAQAVKTREPGQNPATRTFQALRIFVNAELTQLEQGLAAALQCLKPGGRLVVISFHSLEDRIVKTFIASHSKAVVDRRAPFAPPAPMRLRALARLKPGADEVAANPRARSAILRVAERTDVGIAA.

Residues 38-40 (GGH), Asp58, Tyr86, Asp107, and Gln114 each bind S-adenosyl-L-methionine.

It belongs to the methyltransferase superfamily. RsmH family.

The protein resides in the cytoplasm. It catalyses the reaction cytidine(1402) in 16S rRNA + S-adenosyl-L-methionine = N(4)-methylcytidine(1402) in 16S rRNA + S-adenosyl-L-homocysteine + H(+). Its function is as follows. Specifically methylates the N4 position of cytidine in position 1402 (C1402) of 16S rRNA. This is Ribosomal RNA small subunit methyltransferase H from Methylibium petroleiphilum (strain ATCC BAA-1232 / LMG 22953 / PM1).